The following is a 324-amino-acid chain: MLKTRAMFPHKDQAMSLSLDPQSDLVVGHTNNRPITNPLALSLLIGLNNKNKCISDSDFVRSPKSPLEFRVLSTMADSFFLRSPRSSLTAHLNCCCGPAAKVGLSIVDSLGDDRCLLPDIVFGPALRIKCSEVMDKHPKLLFPVANKSKKIENERSGVVFEIGDNSSETEPVGLRNRSFSANDCLRKTRVLSRSKLGQEGDFPGSGSDNAFSSEDDMEDYTCIIAHGPNPKTTHIYGDRVLECHKNELKGDEDNKEKFGSVFPSDNFLGICNFCNKKLGGGDDIYMYREKSFCSEECRSEEMMIDEEDLEEPCIDMHESLKKLF.

The FLZ-type zinc-finger motif lies at 266–309 (NFLGICNFCNKKLGGGDDIYMYREKSFCSEECRSEEMMIDEEDL).

Belongs to the FLZ family. In terms of assembly, interacts with KIN10 and KIN11 via its FLZ-type zinc finger domain. Forms heterodimer with FLZ2 in vitro.

It localises to the cytoplasm. The protein resides in the nucleus. Its function is as follows. May act as an adapter to facilitate the interaction of SnRK1 complex with effector proteins, conferring tissue- and stimulus-type specific differences in the SnRK1 regulation pathway. This chain is FCS-Like Zinc finger 11, found in Arabidopsis thaliana (Mouse-ear cress).